The primary structure comprises 296 residues: Nitrogenase iron protein 1 (296 aa).

11-18 (GKGGIGKS) contacts ATP. C99 contacts [4Fe-4S] cluster. Position 102 is an ADP-ribosylarginine; by dinitrogenase reductase ADP-ribosyltransferase (R102). C133 serves as a coordination point for [4Fe-4S] cluster.

This sequence belongs to the NifH/BchL/ChlL family. In terms of assembly, homodimer. It depends on [4Fe-4S] cluster as a cofactor. The reversible ADP-ribosylation of Arg-102 inactivates the nitrogenase reductase and regulates nitrogenase activity.

It catalyses the reaction N2 + 8 reduced [2Fe-2S]-[ferredoxin] + 16 ATP + 16 H2O = H2 + 8 oxidized [2Fe-2S]-[ferredoxin] + 2 NH4(+) + 16 ADP + 16 phosphate + 6 H(+). In terms of biological role, the key enzymatic reactions in nitrogen fixation are catalyzed by the nitrogenase complex, which has 2 components: the iron protein and the molybdenum-iron protein. This is Nitrogenase iron protein 1 (nifH1) from Azorhizobium caulinodans (strain ATCC 43989 / DSM 5975 / JCM 20966 / LMG 6465 / NBRC 14845 / NCIMB 13405 / ORS 571).